The sequence spans 232 residues: Exosome complex component RRP40 (232 aa).

The protein belongs to the RRP40 family. In terms of assembly, component of the RNA exosome complex. Specifically part of the catalytically inactive RNA exosome core complex.

The protein resides in the cytoplasm. It is found in the nucleus. The protein localises to the nucleolus. Its function is as follows. Non-catalytic component of the RNA exosome complex which has 3'-&gt;5' exoribonuclease activity and participates in a multitude of cellular RNA processing and degradation events. In the nucleus, the RNA exosome complex is involved in proper maturation of stable RNA species such as rRNA, snRNA and snoRNA, in the elimination of RNA processing by-products and non-coding 'pervasive' transcripts such as antisense RNA species, and of mRNAs with processing defects, thereby limiting or excluding their export to the cytoplasm. In the cytoplasm, the RNA exosome complex is involved in general mRNA turnover and specifically degrades inherently unstable mRNAs containing AU-rich elements (AREs) within their 3' untranslated regions, and in RNA surveillance pathways, preventing translation of aberrant mRNAs. The catalytic inactive RNA exosome core complex of 9 subunits is proposed to play a pivotal role in the binding and presentation of RNA for ribonucleolysis, and to serve as a scaffold for the association with catalytic subunits and accessory proteins or complexes. Required generally for normal embryonic and neuronal development. Also plays a critical role in the maintenance of neuronal function in mature flies by controlling the levels of specific mRNAs such as the synaptic regulator Arc1. This is Exosome complex component RRP40 from Drosophila melanogaster (Fruit fly).